We begin with the raw amino-acid sequence, 332 residues long: MSEHAAEHHRDTQNFLTSEPHTTAIEDNKKRQPPKNLADGMIKALRPKQWVKNVLVLAAPLAAGADAIFNQRTIIDVAIAFVVFCFGASAIYLVNDARDVEADREHPTKRFRPIAAGVLPVGMAYGMAVALIALSIGLSFLATDGVALACVIGVYIALQLGYCFGWKHMPVIDIALVSSGFMLRAMAGGVAAGIELSQWFLLVAAFGSLFMASGKRYAEILLHERTGAKIRKSLESYTPTYLRFVWTMAATAVVMSYALWGFDLSQHSTDAGPWYQISMVPFTIAILRYAAGVDTGDGGAPDEVALSDKVLQVLALAWVFCIVMAVYIMPMF.

The segment covering M1–T12 has biased composition (basic and acidic residues). A disordered region spans residues M1 to N36. The next 2 membrane-spanning stretches (helical) occupy residues W50–N70 and I74–V94. K52 and Y92 together coordinate 5-phospho-alpha-D-ribose 1-diphosphate. The Mg(2+) site is built by N95 and D99. K109 contributes to the 5-phospho-alpha-D-ribose 1-diphosphate binding site. Helical transmembrane passes span I114 to L134 and V146 to W166. 5-phospho-alpha-D-ribose 1-diphosphate is bound by residues K167 and R184. 2 helical membrane passes run M169–G189 and V190–F210. K215 contacts trans,octa-cis-decaprenyl phosphate. 3 helical membrane-spanning segments follow: residues F244 to L264, P273 to V293, and V310 to P330.

It belongs to the UbiA prenyltransferase family. DPPR synthase subfamily. Mg(2+) is required as a cofactor.

The protein resides in the cell inner membrane. It catalyses the reaction trans,octa-cis-decaprenyl phosphate + 5-phospho-alpha-D-ribose 1-diphosphate + H(+) = trans,octa-cis-decaprenylphospho-beta-D-ribofuranose 5-phosphate + diphosphate. Its pathway is cell wall biogenesis; cell wall polysaccharide biosynthesis. Functionally, involved in the biosynthesis of decaprenylphosphoryl arabinose (DPA) a precursor for arabinan synthesis in mycobacterial cell wall biosynthesis. Catalyzes the transfer of a 5-phosphoribosyl residue from phosphoribose diphosphate (PRPP) to decaprenyl phosphate (DP) to form decaprenylphosphoryl-5-phosphoribose (DPPR). The chain is Decaprenyl-phosphate phosphoribosyltransferase from Corynebacterium glutamicum (strain ATCC 13032 / DSM 20300 / JCM 1318 / BCRC 11384 / CCUG 27702 / LMG 3730 / NBRC 12168 / NCIMB 10025 / NRRL B-2784 / 534).